The chain runs to 279 residues: MIALFPNESKDPSLKIAAEICQFLISRNIEITAEDKHAKQLNVFPLSQVNVQHINFRISLGGDGTILRLIHKHPTIHAPLLGINLGSLGFLADIPLDGIFPSLEDLIKGRYRVQKRMMVEGSVLCKPSCFAVNEVVIHRAQNPCLIDLAIYVDGNYLNTFSADGMIISTPSGSTAYSLAAGGPILTPELKAFVLTPICPHTISNRPIVLMPEISIQVKYLSSYAPVEVSSDGISSFSLSTNEIFHASISSQTFDLVCLERHDYFATLREKLGWQGKLKI.

D63 (proton acceptor) is an active-site residue. NAD(+) is bound by residues 63–64 (DG), R68, 133–134 (NE), and D163.

Belongs to the NAD kinase family. The cofactor is a divalent metal cation.

It is found in the cytoplasm. The enzyme catalyses NAD(+) + ATP = ADP + NADP(+) + H(+). In terms of biological role, involved in the regulation of the intracellular balance of NAD and NADP, and is a key enzyme in the biosynthesis of NADP. Catalyzes specifically the phosphorylation on 2'-hydroxyl of the adenosine moiety of NAD to yield NADP. The protein is NAD kinase of Protochlamydia amoebophila (strain UWE25).